A 706-amino-acid chain; its full sequence is Choline transporter-like protein 2 (706 aa).

Over 1-32 (MMELEGEKPNYGEPRKYDPTFKGPIYNRGCTD) the chain is Cytoplasmic. Residues 33–53 (IVCCIFFIICILGYVAVGILA) traverse the membrane as a helical segment. Residues 54-232 (WSQGDPRKVI…KIFEDYTQSW (179 aa)) are Extracellular-facing. Asparagine 187 and asparagine 210 each carry an N-linked (GlcNAc...) asparagine glycan. The chain crosses the membrane as a helical span at residues 233 to 253 (YWILIGLVIAMLISLLFIVLL). The Cytoplasmic segment spans residues 254-256 (RFL). The chain crosses the membrane as a helical span at residues 257–277 (AGIMVWVMIVMVILVIGYGIF). The Extracellular segment spans residues 278-315 (HCSMEYVSLKSEAGSNVTLKDLGFQTDFSVYLHIRQTW). A glycan (N-linked (GlcNAc...) asparagine) is linked at asparagine 293. Residues 316 to 336 (LAFIIILAIVEVVIILLLIFL) traverse the membrane as a helical segment. Over 337–364 (RNRILIAIALIKEASRAIGYVMSALFYP) the chain is Cytoplasmic. Residues 365–385 (LFTFALLSIVIAYWAVTAVFL) traverse the membrane as a helical segment. Residues 386–454 (STSNQPIYKV…LQFYNVFLFF (69 aa)) are Extracellular-facing. N-linked (GlcNAc...) asparagine glycans are attached at residues asparagine 397 and asparagine 412. The helical transmembrane segment at 455–477 (WCANFVTALGQMTLAGAFASYYW) threads the bilayer. Topologically, residues 478-504 (ALVKPDDMPAFPIFSSLGRSLRYHTGS) are cytoplasmic. A helical membrane pass occupies residues 505–525 (LAFGSLILSIIQIIRVLLEYI). The Extracellular portion of the chain corresponds to 526–599 (DHKLQGTQNK…RVAVLDKVTD (74 aa)). A helical membrane pass occupies residues 600–620 (FLLFLGKLLIVGLVGIFAFFF). Residues 621-638 (FSGRVKAFENTAPNLHYY) lie on the Cytoplasmic side of the membrane. A helical membrane pass occupies residues 639-659 (WVPILTVVVGSYLIAHGFFSV). At 660–706 (YAMCVDTLFLCFLEDLERNDGSAERPYLMSDRLLKVLNKKNKPEPAE) the chain is on the extracellular side.

Belongs to the CTL (choline transporter-like) family.

It is found in the cell membrane. The protein resides in the mitochondrion outer membrane. The enzyme catalyses choline(out) + n H(+)(in) = choline(in) + n H(+)(out). It catalyses the reaction ethanolamine(out) + n H(+)(in) = ethanolamine(in) + n H(+)(out). In terms of biological role, choline/H+ antiporter, mainly in mitochodria. Also acts as a low-affinity ethanolamine/H+ antiporter, regulating the supply of extracellular ethanolamine (Etn) for the CDP-Etn pathway, redistribute intracellular Etn and balance the CDP-Cho and CDP-Etn arms of the Kennedy pathway. The chain is Choline transporter-like protein 2 (slc44a2) from Salmo salar (Atlantic salmon).